A 449-amino-acid chain; its full sequence is UDP-glycosyltransferase 74F2 (449 aa).

UDP-alpha-D-glucose contacts are provided by residues Ser273, Ser325–Gln327, His342–Glu350, and Trp364–Gln367.

This sequence belongs to the UDP-glycosyltransferase family. As to expression, expressed in seedlings.

In terms of biological role, glycosyltransferase that glucosylates benzoic acid and derivatives. Substrate preference is benzoic acid &gt; salicylic acid (SA) &gt; 3-hydroxybenzoic acid &gt; 4-hydroxybenzoic acid. Catalyzes the formation of both SA 2-O-beta-D-glucoside (SAG) and SA glucose ester (SGE). Has high affinity for the tryptophan precursor anthranilate. Catalyzes the formation of anthranilate glucose ester. Is the major source of this activity in the plant. This chain is UDP-glycosyltransferase 74F2 (UGT74F2), found in Arabidopsis thaliana (Mouse-ear cress).